Consider the following 1774-residue polypeptide: Protein TIC 214 (1774 aa).

6 consecutive transmembrane segments (helical) span residues 19–39 (IINS…FSIG), 68–88 (FIAG…HLAL), 91–111 (PHTI…WNNH), 133–153 (VFLN…SSML), 176–196 (VGWL…LVWI), and 227–247 (IFSI…PSPI). A compositionally biased stretch (basic and acidic residues) spans 254–268 (GTSETEERGGTKQDQ). Positions 254 to 275 (GTSETEERGGTKQDQEVSTEEA) are disordered.

This sequence belongs to the TIC214 family. In terms of assembly, part of the Tic complex.

Its subcellular location is the plastid. The protein resides in the chloroplast inner membrane. In terms of biological role, involved in protein precursor import into chloroplasts. May be part of an intermediate translocation complex acting as a protein-conducting channel at the inner envelope. The sequence is that of Protein TIC 214 from Aethionema cordifolium (Lebanon stonecress).